A 283-amino-acid polypeptide reads, in one-letter code: Glutamate racemase (283 aa).

Substrate-binding positions include 13–14 and 45–46; these read DS and YG. Catalysis depends on Cys-76, which acts as the Proton donor/acceptor. 77–78 contacts substrate; the sequence is NT. The active-site Proton donor/acceptor is the Cys-186. 187–188 provides a ligand contact to substrate; it reads TH.

Belongs to the aspartate/glutamate racemases family.

The enzyme catalyses L-glutamate = D-glutamate. It participates in cell wall biogenesis; peptidoglycan biosynthesis. Functionally, provides the (R)-glutamate required for cell wall biosynthesis. In Microcystis aeruginosa (strain NIES-843 / IAM M-2473), this protein is Glutamate racemase.